The sequence spans 463 residues: MHLHFTPRQIVEKLDQYIIGQKDAKKAVAVALRNRYRRSKLAENLRDEIAPKNILMIGPTGVGKTEVARRMAKLVGAPFIKVEATKFTEVGYVGRDVESMVRDLVETSVRIVKEEMVVKVQDKAEEQANQRLVEILVPSPEKQSGFKNPLEMLFGGAQNSNQTTDSQEDVEIEKKRQDVERKLAAGLLEDEIVSIEVTEQQSSMFDMLQGTGMEQMGMNFQDALGSFMPKKTKKRKLSVKEARKVLTNEEAQRLIDMDEVTQEAVYRAEQLGIIFIDEIDKIAGKQSNSVDVSREGVQRDILPIVEGSNVATKYGSVKTDYILFVAAGAFHMSKPSDLIPELQGRFPIRVELTKLSTDDFVKILIEPDNALIKQYMALLATEGIEIEFSDEAIRKIAEIAYQVNQDTDNIGARRLHTIMEKLLEDLSFEASEITLEKITITPQYVEEKLATIAKNKDVSQFIL.

ATP-binding positions include I19, 61-66 (GVGKTE), D277, E341, and R413.

The protein belongs to the ClpX chaperone family. HslU subfamily. A double ring-shaped homohexamer of HslV is capped on each side by a ring-shaped HslU homohexamer. The assembly of the HslU/HslV complex is dependent on binding of ATP.

The protein resides in the cytoplasm. ATPase subunit of a proteasome-like degradation complex; this subunit has chaperone activity. The binding of ATP and its subsequent hydrolysis by HslU are essential for unfolding of protein substrates subsequently hydrolyzed by HslV. HslU recognizes the N-terminal part of its protein substrates and unfolds these before they are guided to HslV for hydrolysis. In Bacillus cereus (strain 03BB102), this protein is ATP-dependent protease ATPase subunit HslU.